The chain runs to 444 residues: Chromosome partition protein MukF (444 aa).

The interval 212 to 240 (LDETSGNLRELQDTLNAAGDKLQAQLLRI) is leucine-zipper.

The protein belongs to the MukF family. Interacts, and probably forms a ternary complex, with MukE and MukB via its C-terminal region. The complex formation is stimulated by calcium or magnesium. It is required for an interaction between MukE and MukB.

The protein localises to the cytoplasm. It localises to the nucleoid. Involved in chromosome condensation, segregation and cell cycle progression. May participate in facilitating chromosome segregation by condensation DNA from both sides of a centrally located replisome during cell division. Not required for mini-F plasmid partitioning. Probably acts via its interaction with MukB and MukE. Overexpression results in anucleate cells. It has a calcium binding activity. In Haemophilus influenzae (strain ATCC 51907 / DSM 11121 / KW20 / Rd), this protein is Chromosome partition protein MukF.